A 366-amino-acid polypeptide reads, in one-letter code: Histidinol-phosphate aminotransferase (366 aa).

Lysine 227 bears the N6-(pyridoxal phosphate)lysine mark.

Belongs to the class-II pyridoxal-phosphate-dependent aminotransferase family. Histidinol-phosphate aminotransferase subfamily. As to quaternary structure, homodimer. Pyridoxal 5'-phosphate is required as a cofactor.

It carries out the reaction L-histidinol phosphate + 2-oxoglutarate = 3-(imidazol-4-yl)-2-oxopropyl phosphate + L-glutamate. It functions in the pathway amino-acid biosynthesis; L-histidine biosynthesis; L-histidine from 5-phospho-alpha-D-ribose 1-diphosphate: step 7/9. This chain is Histidinol-phosphate aminotransferase, found in Campylobacter hominis (strain ATCC BAA-381 / DSM 21671 / CCUG 45161 / LMG 19568 / NCTC 13146 / CH001A).